The chain runs to 127 residues: Alpha-hordothionin (127 aa).

The N-terminal stretch at 1–18 (MVCLLILGLVLEQVQVEG) is a signal peptide. 4 disulfides stabilise this stretch: C21/C57, C22/C49, C30/C47, and C34/C43. Positions 64–127 (LALVSNSDEP…GDAGLTSLTA (64 aa)) are cleaved as a propeptide — acidic domain.

It belongs to the plant thionin (TC 1.C.44) family. 4 C-C subfamily.

Its subcellular location is the secreted. Its function is as follows. Thionins are small plant proteins which are toxic to animal cells. They seem to exert their toxic effect at the level of the cell membrane. Their precise function is not known. This chain is Alpha-hordothionin (THI1.1), found in Hordeum vulgare (Barley).